Here is a 175-residue protein sequence, read N- to C-terminus: Ribulose bisphosphate carboxylase small subunit, chloroplastic (175 aa).

Residues 1–46 (MAPSVMASSATTVAPFQGLKSTAGMPVARRSGNSSFGNVSNGGRIR) constitute a chloroplast transit peptide. An interaction with large subunit region spans residues 60–64 (ETLSY).

Belongs to the RuBisCO small chain family. As to quaternary structure, heterohexadecamer of 8 large and 8 small subunits.

It is found in the plastid. The protein localises to the chloroplast. Its function is as follows. RuBisCO catalyzes two reactions: the carboxylation of D-ribulose 1,5-bisphosphate, the primary event in carbon dioxide fixation, as well as the oxidative fragmentation of the pentose substrate. Both reactions occur simultaneously and in competition at the same active site. Although the small subunit is not catalytic it is essential for maximal activity. This Oryza sativa subsp. indica (Rice) protein is Ribulose bisphosphate carboxylase small subunit, chloroplastic.